Reading from the N-terminus, the 187-residue chain is Bifunctional protein PyrR (187 aa).

The PRPP-binding signature appears at 109 to 121 (VILVDDVLYSGRS).

It belongs to the purine/pyrimidine phosphoribosyltransferase family. PyrR subfamily.

It carries out the reaction UMP + diphosphate = 5-phospho-alpha-D-ribose 1-diphosphate + uracil. Regulates the transcription of the pyrimidine nucleotide (pyr) operon in response to exogenous pyrimidines. Its function is as follows. Also displays a weak uracil phosphoribosyltransferase activity which is not physiologically significant. The sequence is that of Bifunctional protein PyrR from Mycobacterium ulcerans (strain Agy99).